The following is a 298-amino-acid chain: Probable protein phosphatase 2C 26 (298 aa).

The PPM-type phosphatase domain maps to 48 to 295; sequence SVGIHAIPHP…DDVTVIVAKV (248 aa). Mn(2+) is bound by residues D82, G83, D213, and D286.

It belongs to the PP2C family. Mg(2+) is required as a cofactor. It depends on Mn(2+) as a cofactor.

The catalysed reaction is O-phospho-L-seryl-[protein] + H2O = L-seryl-[protein] + phosphate. It carries out the reaction O-phospho-L-threonyl-[protein] + H2O = L-threonyl-[protein] + phosphate. This Arabidopsis thaliana (Mouse-ear cress) protein is Probable protein phosphatase 2C 26.